Here is a 419-residue protein sequence, read N- to C-terminus: 3-isopropylmalate dehydratase large subunit (419 aa).

Cys-300, Cys-360, and Cys-363 together coordinate [4Fe-4S] cluster.

This sequence belongs to the aconitase/IPM isomerase family. LeuC type 2 subfamily. In terms of assembly, heterodimer of LeuC and LeuD. [4Fe-4S] cluster serves as cofactor.

It carries out the reaction (2R,3S)-3-isopropylmalate = (2S)-2-isopropylmalate. It functions in the pathway amino-acid biosynthesis; L-leucine biosynthesis; L-leucine from 3-methyl-2-oxobutanoate: step 2/4. Catalyzes the isomerization between 2-isopropylmalate and 3-isopropylmalate, via the formation of 2-isopropylmaleate. The chain is 3-isopropylmalate dehydratase large subunit from Acetivibrio thermocellus (strain ATCC 27405 / DSM 1237 / JCM 9322 / NBRC 103400 / NCIMB 10682 / NRRL B-4536 / VPI 7372) (Clostridium thermocellum).